A 484-amino-acid polypeptide reads, in one-letter code: Protein nucleotidyltransferase YdiU (484 aa).

ATP is bound by residues Gly-81, Gly-83, Arg-84, Lys-103, Asp-115, Gly-116, Arg-166, and Arg-173. Residue Asp-244 is the Proton acceptor of the active site. Positions 245 and 254 each coordinate Mg(2+). Asp-254 is a binding site for ATP.

This sequence belongs to the SELO family. It depends on Mg(2+) as a cofactor. Requires Mn(2+) as cofactor.

It catalyses the reaction L-seryl-[protein] + ATP = 3-O-(5'-adenylyl)-L-seryl-[protein] + diphosphate. The enzyme catalyses L-threonyl-[protein] + ATP = 3-O-(5'-adenylyl)-L-threonyl-[protein] + diphosphate. The catalysed reaction is L-tyrosyl-[protein] + ATP = O-(5'-adenylyl)-L-tyrosyl-[protein] + diphosphate. It carries out the reaction L-histidyl-[protein] + UTP = N(tele)-(5'-uridylyl)-L-histidyl-[protein] + diphosphate. It catalyses the reaction L-seryl-[protein] + UTP = O-(5'-uridylyl)-L-seryl-[protein] + diphosphate. The enzyme catalyses L-tyrosyl-[protein] + UTP = O-(5'-uridylyl)-L-tyrosyl-[protein] + diphosphate. Nucleotidyltransferase involved in the post-translational modification of proteins. It can catalyze the addition of adenosine monophosphate (AMP) or uridine monophosphate (UMP) to a protein, resulting in modifications known as AMPylation and UMPylation. The sequence is that of Protein nucleotidyltransferase YdiU from Shewanella oneidensis (strain ATCC 700550 / JCM 31522 / CIP 106686 / LMG 19005 / NCIMB 14063 / MR-1).